Consider the following 215-residue polypeptide: Ribosomal RNA small subunit methyltransferase G (215 aa).

S-adenosyl-L-methionine-binding positions include Gly-78, Leu-83, 128 to 129, and Arg-146; that span reads AE.

It belongs to the methyltransferase superfamily. RNA methyltransferase RsmG family.

It is found in the cytoplasm. The enzyme catalyses guanosine(527) in 16S rRNA + S-adenosyl-L-methionine = N(7)-methylguanosine(527) in 16S rRNA + S-adenosyl-L-homocysteine. Functionally, specifically methylates the N7 position of guanine in position 527 of 16S rRNA. The protein is Ribosomal RNA small subunit methyltransferase G of Anaeromyxobacter dehalogenans (strain 2CP-1 / ATCC BAA-258).